The sequence spans 323 residues: tRNA U34 carboxymethyltransferase (323 aa).

Carboxy-S-adenosyl-L-methionine contacts are provided by residues Lys-91, Trp-105, Lys-110, Gly-130, 152–154 (DPT), 181–182 (IE), Met-196, Tyr-200, and Arg-315.

It belongs to the class I-like SAM-binding methyltransferase superfamily. CmoB family. In terms of assembly, homotetramer.

It carries out the reaction carboxy-S-adenosyl-L-methionine + 5-hydroxyuridine(34) in tRNA = 5-carboxymethoxyuridine(34) in tRNA + S-adenosyl-L-homocysteine + H(+). In terms of biological role, catalyzes carboxymethyl transfer from carboxy-S-adenosyl-L-methionine (Cx-SAM) to 5-hydroxyuridine (ho5U) to form 5-carboxymethoxyuridine (cmo5U) at position 34 in tRNAs. This is tRNA U34 carboxymethyltransferase from Salmonella agona (strain SL483).